The chain runs to 1724 residues: Protein scribble homolog (1724 aa).

Residues 1–821 are sufficient for targeting to adherens junction; sequence MLKCIPLWRC…MTVLRERMVE (821 aa). LRR repeat units lie at residues 11-34, 35-58, 59-81, 83-105, 107-127, 128-150, 151-174, 176-196, 197-219, 221-242, 244-265, 266-288, 289-311, 312-334, 336-357, 359-380, and 382-405; these read NRHV…IYRY, NRSL…FFRL, HNLR…VANF, QLVE…KFCQ, LEIA…FTQL, RGLA…IGNL, SNLV…SFLV, LEQL…LGAL, PNLR…LGNL, QLVC…ISGL, ALTD…IGSL, KKLS…IGEC, ENLT…LGKL, KKLT…LGGC, SLNV…LANA, ELHV…LANL, and LKAM…DDEQ. Disordered regions lie at residues 451 to 484, 496 to 620, and 646 to 683; these read RDDS…LKVM, YTAR…RKDT, and SHDG…HTPF. A compositionally biased stretch (low complexity) spans 518–534; the sequence is SNQSHDSQASSSTTSAT. Over residues 554–567 the composition is skewed to acidic residues; sequence VQEEEDLDEMEVEY. Positions 574-583 are enriched in basic and acidic residues; the sequence is FAEEPIIRGG. Positions 584–598 are enriched in acidic residues; it reads DEDDDYDNDDDDAER. A compositionally biased stretch (basic and acidic residues) spans 611–620; it reads EKQRLIRKDT. Positions 661-678 are enriched in acidic residues; the sequence is RDGEDDEEEEEDEDEEDD. PDZ domains are found at residues 731–818, 867–955, 1005–1094, and 1101–1193; these read TLSI…LRER, ATCL…DREQ, EVTL…RRDP, and EIVI…CDGF. Residues 955-995 are disordered; sequence QSSVGGASPRTRPHSPPPPEPSDSPEQEDGGDEHLGNHLNC. Disordered stretches follow at residues 1283–1407, 1414–1433, 1449–1468, and 1488–1555; these read LQKV…DRQK, KQQT…EDDL, REFM…AKQV, and SLGS…GESA. The span at 1295 to 1306 shows a compositional bias: basic and acidic residues; it reads FRIDSPVRDAAH. Composition is skewed to polar residues over residues 1308–1329, 1346–1357, and 1364–1385; these read PHNS…NAST, PASQDGHSSPNP, and PINS…KQPS. The span at 1395–1407 shows a compositional bias: basic and acidic residues; sequence HSPEQRSFKDRQK. Positions 1430–1461 form a coiled coil; the sequence is EDDLKKMKEEEAKRIEQRAREFMLDEDEEEEE. The segment covering 1453–1463 has biased composition (acidic residues); the sequence is LDEDEEEEEED. Polar residues predominate over residues 1490–1506; the sequence is GSPTSRQCATPPNYSAT. Over residues 1507 to 1518 the composition is skewed to low complexity; sequence PPSHCGSSGPSS. Residues 1521 to 1538 show a composition bias toward basic and acidic residues; that stretch reads GKGDSQRNSVEDSFRLEQ. Position 1609 is a phosphoserine (S1609). The disordered stretch occupies residues 1621–1684; it reads IAKSKEGKKR…FMDESSSNAV (64 aa). The segment covering 1623-1632 has biased composition (basic and acidic residues); it reads KSKEGKKRGT.

Post-translationally, palmitoylated.

The protein localises to the cell membrane. It localises to the cell junction. The protein resides in the adherens junction. It is found in the cell projection. Its subcellular location is the lamellipodium. The protein localises to the cytoplasm. It localises to the postsynapse. The protein resides in the presynapse. Functionally, scaffold protein involved in different aspects of polarized cells differentiation regulating epithelial and neuronal morphogenesis. Regulates the caudal migration of the nVII motor neurons. Required for convergent extension movements during gastrulation. This is Protein scribble homolog (scrib) from Danio rerio (Zebrafish).